The primary structure comprises 496 residues: Cyclin-L1 (496 aa).

2 cyclin-like regions span residues 68-170 and 183-267; these read ELIQ…RILK and KIIV…TTLR. The tract at residues 301–496 is disordered; the sequence is NPDGTPAILS…SHSGHGRHRR (196 aa). Positions 322-347 are enriched in basic and acidic residues; sequence SPRDVKTEEKSPNFAKVKREMDDKQS. Basic residues-rich tracts occupy residues 358–392, 412–426, 434–446, and 456–468; these read ENKR…RRSR, RRHH…KLKH, RHAH…HSPS, and KKHR…HRER. Positions 363 to 406 are RS; it reads RSVSRSRSRTKSRSRSHSPRRHYNNRRRSRSGTYSSRSRSRSRS. Basic and acidic residues predominate over residues 469-478; that stretch reads RERSRSFERS. Residues 479-496 are compositionally biased toward basic residues; sequence HKNKHHGSSHSGHGRHRR.

The protein belongs to the cyclin family. Cyclin L subfamily.

It localises to the nucleus speckle. It is found in the nucleus. Its subcellular location is the nucleoplasm. Its function is as follows. Involved in pre-mRNA splicing. The sequence is that of Cyclin-L1 (ccnl1) from Xenopus laevis (African clawed frog).